The following is a 103-amino-acid chain: Enhancer of rudimentary homolog (103 aa).

This sequence belongs to the E(R) family. In terms of assembly, homodimer.

May have a role in the cell cycle. This Aedes aegypti (Yellowfever mosquito) protein is Enhancer of rudimentary homolog.